The sequence spans 166 residues: Lipoprotein signal peptidase (166 aa).

The next 4 helical transmembrane spans lie at 9 to 29 (ASGA…FDQL), 45 to 65 (ALTS…FGFL), 71 to 91 (WQRW…CFLL), and 100 to 120 (FSVS…DRLV). Active-site residues include Asp126 and Asp144. Residues 135–155 (WHFPAFNLADSAITIGAVLLI) traverse the membrane as a helical segment.

This sequence belongs to the peptidase A8 family.

The protein resides in the cell inner membrane. The catalysed reaction is Release of signal peptides from bacterial membrane prolipoproteins. Hydrolyzes -Xaa-Yaa-Zaa-|-(S,diacylglyceryl)Cys-, in which Xaa is hydrophobic (preferably Leu), and Yaa (Ala or Ser) and Zaa (Gly or Ala) have small, neutral side chains.. Its pathway is protein modification; lipoprotein biosynthesis (signal peptide cleavage). This protein specifically catalyzes the removal of signal peptides from prolipoproteins. This chain is Lipoprotein signal peptidase, found in Burkholderia cenocepacia (strain ATCC BAA-245 / DSM 16553 / LMG 16656 / NCTC 13227 / J2315 / CF5610) (Burkholderia cepacia (strain J2315)).